The sequence spans 92 residues: Putative protein IntG (92 aa).

It belongs to the 'phage' integrase family.

The chain is Putative protein IntG (intG) from Escherichia coli (strain K12).